Consider the following 348-residue polypeptide: Hereditary hemochromatosis protein homolog (348 aa).

The first 22 residues, 1–22 (MGPRARPALFFLILLRTVAAQG), serve as a signal peptide directing secretion. An alpha-1 region spans residues 23–114 (RPPRSHSLRY…IMDNHNHSKE (92 aa)). At 23-306 (RPPRSHSLRY…WEPSLSNTLV (284 aa)) the chain is on the extracellular side. N-linked (GlcNAc...) asparagine glycans are attached at residues Asn110, Asn130, and Asn234. The tract at residues 115–205 (SHTLQVILGC…ELGRGVLDQQ (91 aa)) is alpha-2. 2 disulfide bridges follow: Cys124–Cys187 and Cys225–Cys282. The tract at residues 206 to 297 (VPPLVKVTHH…GLDQPLTATW (92 aa)) is alpha-3. The Ig-like C1-type domain maps to 207 to 296 (PPLVKVTHHV…PGLDQPLTAT (90 aa)). The segment at 298-306 (EPSLSNTLV) is connecting peptide. Residues 307–330 (TGVISGIAVCVIIFLIGILFRILR) traverse the membrane as a helical segment. Residues 331–348 (KRQASRGAMGDYVLAECE) lie on the Cytoplasmic side of the membrane.

Belongs to the MHC class I family. In terms of assembly, binds TFR through the extracellular domain in a pH-dependent manner.

It is found in the cell membrane. Its function is as follows. Binds to transferrin receptor (TFR) and reduces its affinity for iron-loaded transferrin. The polypeptide is Hereditary hemochromatosis protein homolog (HFE) (Dicerorhinus sumatrensis (Sumatran rhinoceros)).